A 254-amino-acid polypeptide reads, in one-letter code: Leucyl/phenylalanyl-tRNA--protein transferase (254 aa).

It belongs to the L/F-transferase family.

It is found in the cytoplasm. The enzyme catalyses N-terminal L-lysyl-[protein] + L-leucyl-tRNA(Leu) = N-terminal L-leucyl-L-lysyl-[protein] + tRNA(Leu) + H(+). It catalyses the reaction N-terminal L-arginyl-[protein] + L-leucyl-tRNA(Leu) = N-terminal L-leucyl-L-arginyl-[protein] + tRNA(Leu) + H(+). It carries out the reaction L-phenylalanyl-tRNA(Phe) + an N-terminal L-alpha-aminoacyl-[protein] = an N-terminal L-phenylalanyl-L-alpha-aminoacyl-[protein] + tRNA(Phe). In terms of biological role, functions in the N-end rule pathway of protein degradation where it conjugates Leu, Phe and, less efficiently, Met from aminoacyl-tRNAs to the N-termini of proteins containing an N-terminal arginine or lysine. The protein is Leucyl/phenylalanyl-tRNA--protein transferase of Burkholderia ambifaria (strain MC40-6).